A 286-amino-acid chain; its full sequence is Bifunctional protein FolD (286 aa).

Residues 164–166 (GRS), serine 193, and isoleucine 234 each bind NADP(+).

The protein belongs to the tetrahydrofolate dehydrogenase/cyclohydrolase family. In terms of assembly, homodimer.

The catalysed reaction is (6R)-5,10-methylene-5,6,7,8-tetrahydrofolate + NADP(+) = (6R)-5,10-methenyltetrahydrofolate + NADPH. It catalyses the reaction (6R)-5,10-methenyltetrahydrofolate + H2O = (6R)-10-formyltetrahydrofolate + H(+). It functions in the pathway one-carbon metabolism; tetrahydrofolate interconversion. Its function is as follows. Catalyzes the oxidation of 5,10-methylenetetrahydrofolate to 5,10-methenyltetrahydrofolate and then the hydrolysis of 5,10-methenyltetrahydrofolate to 10-formyltetrahydrofolate. In Oleidesulfovibrio alaskensis (strain ATCC BAA-1058 / DSM 17464 / G20) (Desulfovibrio alaskensis), this protein is Bifunctional protein FolD.